The sequence spans 477 residues: Glutamyl-tRNA(Gln) amidotransferase subunit A (477 aa).

Active-site charge relay system residues include lysine 76 and serine 151. Serine 175 (acyl-ester intermediate) is an active-site residue.

Belongs to the amidase family. GatA subfamily. As to quaternary structure, heterotrimer of A, B and C subunits.

It carries out the reaction L-glutamyl-tRNA(Gln) + L-glutamine + ATP + H2O = L-glutaminyl-tRNA(Gln) + L-glutamate + ADP + phosphate + H(+). In terms of biological role, allows the formation of correctly charged Gln-tRNA(Gln) through the transamidation of misacylated Glu-tRNA(Gln) in organisms which lack glutaminyl-tRNA synthetase. The reaction takes place in the presence of glutamine and ATP through an activated gamma-phospho-Glu-tRNA(Gln). The sequence is that of Glutamyl-tRNA(Gln) amidotransferase subunit A from Chlorobium phaeobacteroides (strain BS1).